The sequence spans 428 residues: Flotillin-2 (428 aa).

The N-myristoyl glycine moiety is linked to residue Gly2. Residue Cys4 is the site of S-palmitoyl cysteine; by ZDHHC5 attachment. Residue Cys19 is the site of S-palmitoyl cysteine attachment. The S-palmitoyl cysteine; by ZDHHC5 moiety is linked to residue Cys20. Residue Ser405 is modified to Phosphoserine.

Belongs to the band 7/mec-2 family. Flotillin subfamily. In terms of assembly, heterooligomeric complex of flotillin-1 and flotillin-2 and caveolin-1 and caveolin-2. Interacts with ECPAS. In terms of processing, ZDHHC5-catalyzed palmitoylation may be required for the formation of higher-order complexes and for neurite outgrowth in cultured neural stem cells.

The protein resides in the cell membrane. It is found in the membrane. Its subcellular location is the caveola. The protein localises to the endosome. Its function is as follows. May act as a scaffolding protein within caveolar membranes, functionally participating in formation of caveolae or caveolae-like vesicles. May be involved in epidermal cell adhesion and epidermal structure and function. The sequence is that of Flotillin-2 (FLOT2) from Bos taurus (Bovine).